Reading from the N-terminus, the 325-residue chain is Small ribosomal subunit protein uS3 (325 aa).

The KH type-2 domain maps to 38–106 (IRKMMSKGME…QVQLNILEVK (69 aa)). Residues 217–325 (EALLRQQRRE…AQGAPEKAEG (109 aa)) are disordered. The span at 222–232 (QQRRERPRRGP) shows a compositional bias: basic residues. The span at 285–316 (TESAAVEGTPVETPAVTPETTAAPAAVTTAEA) shows a compositional bias: low complexity.

Belongs to the universal ribosomal protein uS3 family. As to quaternary structure, part of the 30S ribosomal subunit. Forms a tight complex with proteins S10 and S14.

Its function is as follows. Binds the lower part of the 30S subunit head. Binds mRNA in the 70S ribosome, positioning it for translation. This chain is Small ribosomal subunit protein uS3, found in Parafrankia sp. (strain EAN1pec).